The following is a 141-amino-acid chain: Large ribosomal subunit protein uL11 (141 aa).

The protein belongs to the universal ribosomal protein uL11 family. In terms of assembly, part of the ribosomal stalk of the 50S ribosomal subunit. Interacts with L10 and the large rRNA to form the base of the stalk. L10 forms an elongated spine to which L12 dimers bind in a sequential fashion forming a multimeric L10(L12)X complex. Post-translationally, one or more lysine residues are methylated.

In terms of biological role, forms part of the ribosomal stalk which helps the ribosome interact with GTP-bound translation factors. This chain is Large ribosomal subunit protein uL11, found in Clostridium botulinum (strain Alaska E43 / Type E3).